The sequence spans 142 residues: Hemoglobin subunit alpha (142 aa).

The Globin domain maps to 2–142; the sequence is VLSAADKTNV…VSTVLTSKYR (141 aa). Residue Ser-4 is modified to Phosphoserine. Lys-8 is subject to N6-succinyllysine. Thr-9 is subject to Phosphothreonine. Lys-12 carries the N6-succinyllysine modification. At Lys-17 the chain carries N6-acetyllysine; alternate. N6-succinyllysine; alternate is present on Lys-17. Residue Lys-41 is modified to N6-succinyllysine. Ser-50 carries the post-translational modification Phosphoserine. An O2-binding site is contributed by His-59. Residue His-88 coordinates heme b. At Ser-103 the chain carries Phosphoserine. Thr-109 carries the phosphothreonine modification. Residues Ser-125 and Ser-132 each carry the phosphoserine modification. Residues Thr-135 and Thr-138 each carry the phosphothreonine modification. Ser-139 bears the Phosphoserine mark.

Belongs to the globin family. As to quaternary structure, heterotetramer of two alpha chains and two beta chains. Red blood cells.

In terms of biological role, involved in oxygen transport from the lung to the various peripheral tissues. Hemopressin acts as an antagonist peptide of the cannabinoid receptor CNR1. Hemopressin-binding efficiently blocks cannabinoid receptor CNR1 and subsequent signaling. The polypeptide is Hemoglobin subunit alpha (HBA) (Equus przewalskii (Przewalski's horse)).